The chain runs to 164 residues: Lipoprotein signal peptidase (164 aa).

Helical transmembrane passes span 12-32 (FLWLAVVVFVIDQVTKHWIVA), 70-90 (WLFTGIAIAVCGLVTWWLKET), and 93-113 (QQVMLPVAFCLIIGGALGNVF). Active-site residues include D123 and D141. The helical transmembrane segment at 133-153 (YWPAFNVADSAICLGAFLLVI) threads the bilayer.

This sequence belongs to the peptidase A8 family.

It localises to the cell inner membrane. It catalyses the reaction Release of signal peptides from bacterial membrane prolipoproteins. Hydrolyzes -Xaa-Yaa-Zaa-|-(S,diacylglyceryl)Cys-, in which Xaa is hydrophobic (preferably Leu), and Yaa (Ala or Ser) and Zaa (Gly or Ala) have small, neutral side chains.. The protein operates within protein modification; lipoprotein biosynthesis (signal peptide cleavage). In terms of biological role, this protein specifically catalyzes the removal of signal peptides from prolipoproteins. This is Lipoprotein signal peptidase from Pseudoalteromonas atlantica (strain T6c / ATCC BAA-1087).